A 227-amino-acid chain; its full sequence is Large ribosomal subunit protein uL3 (227 aa).

Gln151 bears the N5-methylglutamine mark.

The protein belongs to the universal ribosomal protein uL3 family. In terms of assembly, part of the 50S ribosomal subunit. Forms a cluster with proteins L14 and L19. Methylated by PrmB.

Functionally, one of the primary rRNA binding proteins, it binds directly near the 3'-end of the 23S rRNA, where it nucleates assembly of the 50S subunit. This is Large ribosomal subunit protein uL3 from Gluconacetobacter diazotrophicus (strain ATCC 49037 / DSM 5601 / CCUG 37298 / CIP 103539 / LMG 7603 / PAl5).